Reading from the N-terminus, the 364-residue chain is Salivary endonuclease (364 aa).

An N-terminal signal peptide occupies residues Met1–Ser24. N-linked (GlcNAc...) asparagine glycosylation occurs at Asn285.

It belongs to the DNA/RNA non-specific endonuclease family. It depends on Mg(2+) as a cofactor. As to expression, saliva (at protein level). Female salivary gland.

The protein resides in the secreted. Hydrolyzes double-stranded DNA with no sequence specificity. Does not cleave ssDNA and RNA. May facilitate blood meal intake by lowering the local viscosity created by the release of host DNA. In Culex quinquefasciatus (Southern house mosquito), this protein is Salivary endonuclease.